Here is a 633-residue protein sequence, read N- to C-terminus: Phosphomethylpyrimidine synthase (633 aa).

Residues Asn-245, Met-274, Tyr-303, His-339, 359–361 (SRG), 400–403 (DGLR), and Glu-439 each bind substrate. Zn(2+) is bound at residue His-443. Tyr-466 provides a ligand contact to substrate. Residue His-507 participates in Zn(2+) binding. Positions 587, 590, and 595 each coordinate [4Fe-4S] cluster.

The protein belongs to the ThiC family. As to quaternary structure, homodimer. The cofactor is [4Fe-4S] cluster.

The enzyme catalyses 5-amino-1-(5-phospho-beta-D-ribosyl)imidazole + S-adenosyl-L-methionine = 4-amino-2-methyl-5-(phosphooxymethyl)pyrimidine + CO + 5'-deoxyadenosine + formate + L-methionine + 3 H(+). Its pathway is cofactor biosynthesis; thiamine diphosphate biosynthesis. Catalyzes the synthesis of the hydroxymethylpyrimidine phosphate (HMP-P) moiety of thiamine from aminoimidazole ribotide (AIR) in a radical S-adenosyl-L-methionine (SAM)-dependent reaction. The protein is Phosphomethylpyrimidine synthase of Neisseria meningitidis serogroup C / serotype 2a (strain ATCC 700532 / DSM 15464 / FAM18).